We begin with the raw amino-acid sequence, 221 residues long: Proline-rich protein 20A (221 aa).

2 disordered regions span residues 1–103 (MEEP…QRQG) and 137–174 (SLSE…GPQA). The segment covering 42–53 (PAQPAQPAKPIA) has biased composition (low complexity). Pro residues predominate over residues 63 to 72 (PARPESPPPA). Residues 75 to 93 (GRRRGGSRRPGRGRGRRAG) are compositionally biased toward basic residues.

The protein belongs to the PRR20 family.

This chain is Proline-rich protein 20A (PRR20A), found in Homo sapiens (Human).